The sequence spans 315 residues: Ribosomal RNA small subunit methyltransferase H (315 aa).

S-adenosyl-L-methionine is bound by residues 33 to 35 (GGH), aspartate 52, phenylalanine 84, aspartate 106, and glutamine 113.

It belongs to the methyltransferase superfamily. RsmH family.

The protein localises to the cytoplasm. The enzyme catalyses cytidine(1402) in 16S rRNA + S-adenosyl-L-methionine = N(4)-methylcytidine(1402) in 16S rRNA + S-adenosyl-L-homocysteine + H(+). Functionally, specifically methylates the N4 position of cytidine in position 1402 (C1402) of 16S rRNA. The protein is Ribosomal RNA small subunit methyltransferase H of Lactobacillus acidophilus (strain ATCC 700396 / NCK56 / N2 / NCFM).